A 285-amino-acid chain; its full sequence is 2,4-didehydro-3-deoxy-L-rhamnonate hydrolase (285 aa).

Leucine 73 provides a ligand contact to pyruvate. Glutamate 119, glutamate 121, and aspartate 150 together coordinate Mg(2+). Pyruvate is bound by residues lysine 168 and threonine 238.

The protein belongs to the FAH family. Homodimer. Mg(2+) is required as a cofactor.

The enzyme catalyses 2,4-didehydro-3-deoxy-L-rhamnonate + H2O = (S)-lactate + pyruvate + H(+). It functions in the pathway carbohydrate degradation; L-rhamnose degradation. Its function is as follows. Hydrolase that catalyzes the hydrolysis of 2,4-didehydro-3-deoxy-L-rhamnonate to pyruvate and L-lactate. Can also hydrolyze L-2,4-diketo-3-deoxylyxonate and L-2,4-diketo-3-deoxymannonate. In vitro can also use acylpyruvates such as acetylpyruvate and trimethylacetopyruvate. Catalyzes the fifth (last) step in an alternative pathway for rhamnose utilization that does not involve phosphorylated intermediates. The sequence is that of 2,4-didehydro-3-deoxy-L-rhamnonate hydrolase from Sphingomonas sp. (strain SKA58).